The primary structure comprises 196 residues: RNA-free ribonuclease P (196 aa).

This sequence belongs to the HARP family.

It catalyses the reaction Endonucleolytic cleavage of RNA, removing 5'-extranucleotides from tRNA precursor.. RNA-free RNase P that catalyzes the removal of the 5'-leader sequence from pre-tRNA to produce the mature 5'-terminus. The chain is RNA-free ribonuclease P from Thermodesulfovibrio yellowstonii (strain ATCC 51303 / DSM 11347 / YP87).